The primary structure comprises 660 residues: Glycogen debranching enzyme (660 aa).

Catalysis depends on aspartate 338, which acts as the Nucleophile. Glutamate 373 (proton donor) is an active-site residue. A compositionally biased stretch (basic and acidic residues) spans 460-472 (NEANGEDNRDGAW). The segment at 460–482 (NEANGEDNRDGAWENHSNNHGYE) is disordered.

This sequence belongs to the glycosyl hydrolase 13 family.

The catalysed reaction is Hydrolysis of (1-&gt;6)-alpha-D-glucosidic linkages to branches with degrees of polymerization of three or four glucose residues in limit dextrin.. It functions in the pathway glycan degradation; glycogen degradation. Functionally, removes maltotriose and maltotetraose chains that are attached by 1,6-alpha-linkage to the limit dextrin main chain, generating a debranched limit dextrin. This is Glycogen debranching enzyme from Cronobacter sakazakii (strain ATCC BAA-894) (Enterobacter sakazakii).